Consider the following 182-residue polypeptide: CASP-like protein 5A1 (182 aa).

Residues Met1–Arg47 lie on the Cytoplasmic side of the membrane. A helical transmembrane segment spans residues Phe48–Ser68. The Extracellular portion of the chain corresponds to Ser69–Ala72. Residues Phe73–Leu93 form a helical membrane-spanning segment. Residues Asp94–Asp117 are Cytoplasmic-facing. Residues Trp118–Ile138 traverse the membrane as a helical segment. Residues Asp139 to Ala158 are Extracellular-facing. A helical transmembrane segment spans residues Met159–Val179. Residues Thr180–Arg182 lie on the Cytoplasmic side of the membrane.

Belongs to the Casparian strip membrane proteins (CASP) family. Homodimer and heterodimers.

It localises to the cell membrane. This Physcomitrium patens (Spreading-leaved earth moss) protein is CASP-like protein 5A1.